The sequence spans 277 residues: Inhibition of morphological differentiation protein (277 aa).

3 residues coordinate Mg(2+): Asp18, Asp20, and Asp192.

The protein belongs to the HAD-like hydrolase superfamily. SerB family.

The polypeptide is Inhibition of morphological differentiation protein (Streptomyces azureus).